Here is a 281-residue protein sequence, read N- to C-terminus: Translation initiation factor IF3-4, chloroplastic (281 aa).

The N-terminal 51 residues, 1 to 51, are a transit peptide targeting the chloroplast; the sequence is MAGITSTVGFNAILAGATKTVSHPVKSKLFGLRLCVPEFSIVSLSPYHHRR. Disordered stretches follow at residues 63–86 and 253–281; these read GGGG…DDSL and KVQE…TQDI. Composition is skewed to basic and acidic residues over residues 70 to 79 and 253 to 270; these read PGDRRGRQKE and KVQE…DDKV.

It belongs to the IF-3 family. Monomer.

The protein resides in the plastid. It is found in the chloroplast. Its function is as follows. Chloroplast translation initiation factor that is essential for the coordination of leaf and chloroplast development. IF-3 binds to the 30S ribosomal subunit and shifts the equilibrium between 70S ribosomes and their 50S and 30S subunits in favor of the free subunits, thus enhancing the availability of 30S subunits on which protein synthesis initiation begins. The polypeptide is Translation initiation factor IF3-4, chloroplastic (Arabidopsis thaliana (Mouse-ear cress)).